Here is a 349-residue protein sequence, read N- to C-terminus: Anthranilate phosphoribosyltransferase (349 aa).

Residues Gly82, Gly85 to Asp86, Asn92 to Thr95, Lys110 to Ser118, and Ser122 each bind 5-phospho-alpha-D-ribose 1-diphosphate. Gly82 contributes to the anthranilate binding site. Mg(2+) is bound at residue Ser94. Residue Asn113 coordinates anthranilate. Position 168 (Arg168) interacts with anthranilate. Mg(2+)-binding residues include Asp227 and Glu228.

The protein belongs to the anthranilate phosphoribosyltransferase family. As to quaternary structure, homodimer. Mg(2+) is required as a cofactor.

The catalysed reaction is N-(5-phospho-beta-D-ribosyl)anthranilate + diphosphate = 5-phospho-alpha-D-ribose 1-diphosphate + anthranilate. It participates in amino-acid biosynthesis; L-tryptophan biosynthesis; L-tryptophan from chorismate: step 2/5. Its function is as follows. Catalyzes the transfer of the phosphoribosyl group of 5-phosphorylribose-1-pyrophosphate (PRPP) to anthranilate to yield N-(5'-phosphoribosyl)-anthranilate (PRA). The chain is Anthranilate phosphoribosyltransferase from Acinetobacter baylyi (strain ATCC 33305 / BD413 / ADP1).